A 215-amino-acid polypeptide reads, in one-letter code: Cytochrome b6 (215 aa).

The helical transmembrane segment at 32–52 (IFYCLGGITFTLFLVQVATGF) threads the bilayer. Cys-35 is a binding site for heme c. Heme b contacts are provided by His-86 and His-100. A run of 3 helical transmembrane segments spans residues 90–110 (ASMM…TGGF), 116–136 (LTWI…VTGY), and 186–206 (LHTF…FLMI). Residues His-187 and His-202 each coordinate heme b.

This sequence belongs to the cytochrome b family. PetB subfamily. The 4 large subunits of the cytochrome b6-f complex are cytochrome b6, subunit IV (17 kDa polypeptide, PetD), cytochrome f and the Rieske protein, while the 4 small subunits are PetG, PetL, PetM and PetN. The complex functions as a dimer. It depends on heme b as a cofactor. Heme c is required as a cofactor.

The protein localises to the plastid. It localises to the chloroplast thylakoid membrane. Its function is as follows. Component of the cytochrome b6-f complex, which mediates electron transfer between photosystem II (PSII) and photosystem I (PSI), cyclic electron flow around PSI, and state transitions. This is Cytochrome b6 from Tupiella akineta (Green alga).